The chain runs to 72 residues: Translation initiation factor IF-1 (72 aa).

Residues 1–72 form the S1-like domain; the sequence is MAKEGAIEVE…TRGRIVYRYK (72 aa).

The protein belongs to the IF-1 family. As to quaternary structure, component of the 30S ribosomal translation pre-initiation complex which assembles on the 30S ribosome in the order IF-2 and IF-3, IF-1 and N-formylmethionyl-tRNA(fMet); mRNA recruitment can occur at any time during PIC assembly.

Its subcellular location is the cytoplasm. Functionally, one of the essential components for the initiation of protein synthesis. Stabilizes the binding of IF-2 and IF-3 on the 30S subunit to which N-formylmethionyl-tRNA(fMet) subsequently binds. Helps modulate mRNA selection, yielding the 30S pre-initiation complex (PIC). Upon addition of the 50S ribosomal subunit IF-1, IF-2 and IF-3 are released leaving the mature 70S translation initiation complex. The chain is Translation initiation factor IF-1 from Corynebacterium glutamicum (strain R).